A 440-amino-acid polypeptide reads, in one-letter code: Argininosuccinate lyase (440 aa).

Belongs to the lyase 1 family. Argininosuccinate lyase subfamily.

The protein resides in the cytoplasm. It carries out the reaction 2-(N(omega)-L-arginino)succinate = fumarate + L-arginine. It functions in the pathway amino-acid biosynthesis; L-arginine biosynthesis; L-arginine from L-ornithine and carbamoyl phosphate: step 3/3. This Clostridium botulinum (strain Loch Maree / Type A3) protein is Argininosuccinate lyase.